The sequence spans 241 residues: Demethylmenaquinone methyltransferase (241 aa).

S-adenosyl-L-methionine is bound by residues Thr60, Asp81, and 106 to 107; that span reads DA.

It belongs to the class I-like SAM-binding methyltransferase superfamily. MenG/UbiE family.

It carries out the reaction a 2-demethylmenaquinol + S-adenosyl-L-methionine = a menaquinol + S-adenosyl-L-homocysteine + H(+). It functions in the pathway quinol/quinone metabolism; menaquinone biosynthesis; menaquinol from 1,4-dihydroxy-2-naphthoate: step 2/2. Its function is as follows. Methyltransferase required for the conversion of demethylmenaquinol (DMKH2) to menaquinol (MKH2). This Staphylococcus carnosus (strain TM300) protein is Demethylmenaquinone methyltransferase.